The following is a 616-amino-acid chain: Chaperone protein HscA homolog (616 aa).

This sequence belongs to the heat shock protein 70 family.

Its function is as follows. Chaperone involved in the maturation of iron-sulfur cluster-containing proteins. Has a low intrinsic ATPase activity which is markedly stimulated by HscB. The protein is Chaperone protein HscA homolog of Aliivibrio fischeri (strain ATCC 700601 / ES114) (Vibrio fischeri).